The primary structure comprises 265 residues: Reduced viability upon starvation protein 161 (265 aa).

A BAR domain is found at 15–239; it reads HSVIIKNVDK…LDQQSRDDYA (225 aa). Residues 126–193 adopt a coiled-coil conformation; that stretch reads YFKEIEEAIK…NQLKTELPQL (68 aa).

Its subcellular location is the cytoplasm. It is found in the cytoskeleton. Functionally, component of a cytoskeletal structure that is required for the formation of endocytic vesicles at the plasma membrane level. This Saccharomyces cerevisiae (strain ATCC 204508 / S288c) (Baker's yeast) protein is Reduced viability upon starvation protein 161 (RVS161).